Consider the following 185-residue polypeptide: Iodate reductase subunit IdrB (185 aa).

Positions 1–46 (MTTHPIHLHHDDPAHGGERACMSRRSFLLAGGAMVTLASLPGTAVA) form a signal peptide, tat-type signal. In terms of domain architecture, Rieske spans 69-168 (GEPLEFAYPY…LEVRGDDIYA (100 aa)). The [2Fe-2S] cluster site is built by C109, H111, C130, and H133.

This sequence belongs to the AOX family. As to quaternary structure, the iodate reductase (Idr) complex is composed of a molybdopterin-dependent iodate reductase (IdrA and IdrB subunits) and two associated peroxidases (IdrP1 and IdrP2). It depends on [2Fe-2S] cluster as a cofactor. Predicted to be exported by the Tat system. The position of the signal peptide cleavage has not been experimentally proven.

Its subcellular location is the periplasm. Its function is as follows. Involved in iodate respiration. May accept electrons from cytochrome c551, and catalyze the reduction of iodate (IO(3)(-)) to produce the chemically unstable intermediate hypoiodous acid (HIO). This intermediate then undergoes abiotic disproportionation to yield two molecules of iodide (I(-)) and one molecule of iodate. The resultant iodate subsequently cycles back into the reductive pathway. The initial reduction of iodate may inadvertently produce low levels of incidental toxic H(2)O(2), which is detoxified by IdrP1 and IdrP2. In Denitromonas iodatirespirans, this protein is Iodate reductase subunit IdrB.